The following is a 358-amino-acid chain: BAG family molecular chaperone regulator 1 (358 aa).

Basic and acidic residues-rich tracts occupy residues 1–14 (MADRGGARRPRGDQ), 26–39 (SARETRQSESRAER), and 85–94 (KVAHSKELTR). The segment at 1 to 113 (MADRGGARRP…VTGTQEATQV (113 aa)) is disordered. Tandem repeats lie at residues 102 to 111 (KKVTGTQEAT), 114 to 119 (EEVTTI), 120 to 125 (EEATQT), 126 to 131 (EEITVA), 132 to 137 (EEVTQT), 144 to 149 (EEMVQT), and 150 to 155 (EEMEPP). Residues 114–212 (EEVTTIEEAT…LIFKGKSLKE (99 aa)) form a 7 X 6 AA tandem repeat of E-E-X(4) region. The Ubiquitin-like domain maps to 157–237 (LSVVVTHSNE…VMLIGEKSNP (81 aa)). The interaction with HSPA8 stretch occupies residues 185 to 232 (DLAQLVEEATGVPLPFQKLIFKGKSLKEMETPLSALGMQNGCRVMLIG). The interaction with PPP1R15A stretch occupies residues 229–358 (MLIGEKSNPE…LQSTNLALPE (130 aa)). The BAG domain maps to 259 to 339 (HLEELNKELS…VFLAECDTVE (81 aa)).

Homodimer. Forms a heteromeric complex with HSP70/HSC70. Binds to the ATPase domain of HSP/HSC70 chaperones. Interacts with NR3C1. Interacts with the N-terminal region of MAPRE2. Interacts with PPP1R15A. Interacts with BCL2 in an ATP-dependent manner. Interacts with SIAH1, SIAH2, HSPA8 (via NBD), HSPA1A (via NBD) and HSPA1B (via NBD). Interacts with ESR1; the interaction is promoted in the absence of estradiol (17-beta-estradiol/E2). In terms of processing, ubiquitinated; mediated by SIAH1 or SIAH2 and leading to its subsequent proteasomal degradation. In terms of tissue distribution, expressed in the CA1 region of the hippocampus (at protein level). Expressed in the uterus (at protein level).

The protein localises to the nucleus. It localises to the cytoplasm. Functionally, co-chaperone for HSP70 and HSC70 chaperone proteins. Acts as a nucleotide-exchange factor (NEF) promoting the release of ADP from the HSP70 and HSC70 proteins thereby triggering client/substrate protein release. Nucleotide release is mediated via its binding to the nucleotide-binding domain (NBD) of HSPA8/HSC70 where as the substrate release is mediated via its binding to the substrate-binding domain (SBD) of HSPA8/HSC70. Inhibits the pro-apoptotic function of PPP1R15A, and has anti-apoptotic activity. Markedly increases the anti-cell death function of BCL2 induced by various stimuli. Involved in the STUB1-mediated proteasomal degradation of ESR1 in response to age-related circulating estradiol (17-beta-estradiol/E2) decline, thereby promotes neuronal apoptosis in response to ischemic reperfusion injury. This is BAG family molecular chaperone regulator 1 (Bag1) from Rattus norvegicus (Rat).